Reading from the N-terminus, the 166-residue chain is Ribosome maturation factor RimM (166 aa).

The 76-residue stretch at 90–165 folds into the PRC barrel domain; the sequence is NDNDAFSIFY…IITLKNIEGL (76 aa).

This sequence belongs to the RimM family. As to quaternary structure, binds ribosomal protein uS19.

The protein resides in the cytoplasm. An accessory protein needed during the final step in the assembly of 30S ribosomal subunit, possibly for assembly of the head region. Essential for efficient processing of 16S rRNA. May be needed both before and after RbfA during the maturation of 16S rRNA. It has affinity for free ribosomal 30S subunits but not for 70S ribosomes. The protein is Ribosome maturation factor RimM of Mesoplasma florum (strain ATCC 33453 / NBRC 100688 / NCTC 11704 / L1) (Acholeplasma florum).